Here is a 529-residue protein sequence, read N- to C-terminus: ATP synthase F(1) complex catalytic subunit beta, mitochondrial (529 aa).

The N-terminal 46 residues, 1–46 (MLSLVGRVASASASGALRGLNPLAALPQAHLLLRTAPAGVHPARDY), are a transit peptide targeting the mitochondrion. An O-linked (GlcNAc) serine glycan is attached at S106. Residues K124, K133, and K161 each carry the N6-acetyllysine; alternate modification. An N6-succinyllysine; alternate mark is found at K124, K133, and K161. An N6-acetyllysine modification is found at K198. Residues G209, V210, G211, K212, T213, and V214 each contribute to the ADP site. Position 209 (G209) interacts with ATP. Residues G209, V210, G211, K212, and T213 each coordinate phosphate. Residues G211, K212, T213, and V214 each contribute to the ATP site. Residue T213 coordinates Mg(2+). E238 is a binding site for Mg(2+). R239 serves as a coordination point for ATP. N6-acetyllysine; alternate is present on residues K259 and K264. K259 and K264 each carry N6-succinyllysine; alternate. At T312 the chain carries Phosphothreonine. At S415 the chain carries Phosphoserine. K426 is subject to N6-acetyllysine. A Phosphoserine modification is found at S433. An N6-acetyllysine mark is found at K480 and K485. At K522 the chain carries N6-acetyllysine; alternate. Position 522 is an N6-succinyllysine; alternate (K522). S529 is subject to Phosphoserine.

This sequence belongs to the ATPase alpha/beta chains family. In terms of assembly, homotrimer. Component of the ATP synthase complex composed at least of ATP5F1A/subunit alpha, ATP5F1B/subunit beta, ATP5MC1/subunit c (homooctomer), MT-ATP6/subunit a, MT-ATP8/subunit 8, ATP5ME/subunit e, ATP5MF/subunit f, ATP5MG/subunit g, ATP5MK/subunit k, ATP5MJ/subunit j, ATP5F1C/subunit gamma, ATP5F1D/subunit delta, ATP5F1E/subunit epsilon, ATP5PF/subunit F6, ATP5PB/subunit b, ATP5PD/subunit d, ATP5PO/subunit OSCP. ATP synthase complex consists of a soluble F(1) head domain (subunits alpha(3) and beta(3)) - the catalytic core - and a membrane F(0) domain - the membrane proton channel (subunits c, a, 8, e, f, g, k and j). These two domains are linked by a central stalk (subunits gamma, delta, and epsilon) rotating inside the F1 region and a stationary peripheral stalk (subunits F6, b, d, and OSCP). Interacts with PPIF. Interacts with BCL2L1 isoform BCL-X(L); the interaction mediates the association of BCL2L1 isoform BCL-X(L) with the mitochondrial membrane F(1)F(0) ATP synthase and enhances neurons metabolic efficiency. Interacts with CLN5 and PPT1. Interacts with S100A1; this interaction increases F1-ATPase activity. Interacts with MTLN. Interacts with TTC5/STRAP; the interaction results in decreased mitochondrial ATP production.

It is found in the mitochondrion inner membrane. It carries out the reaction ATP + H2O + 4 H(+)(in) = ADP + phosphate + 5 H(+)(out). Functionally, catalytic subunit beta, of the soluble F(1) head domain within the mitochondrial ATP synthase complex (F(1)F(0) ATP synthase or complex V) that produces ATP from ADP and phosphate inorganique in the presence of a proton gradient across the membrane which is generated by electron transport complexes of the respiratory chain. With the non-catalytic subunit alpha (ATP5F1A), forms the catalytic core in the F(1) domain. ATP synthase complex consist of two structural domains, F(1) - containing the extramembraneous catalytic core, and F(0) - containing the membrane proton channel, linked together by a central stalk and a peripheral stalk. During catalysis, ATP synthesis in the catalytic domain of F(1) is coupled via a rotary mechanism of the central stalk subunits to proton translocation. In terms of biological role, catalytic subunit beta, of the mitochondrial membrane ATP synthase complex (F(1)F(0) ATP synthase or Complex V) that produces ATP from ADP in the presence of a proton gradient across the membrane which is generated by electron transport complexes of the respiratory chain. ATP synthase complex consist of a soluble F(1) head domain - the catalytic core - and a membrane F(1) domain - the membrane proton channel. These two domains are linked by a central stalk rotating inside the F(1) region and a stationary peripheral stalk. During catalysis, ATP synthesis in the catalytic domain of F(1) is coupled via a rotary mechanism of the central stalk subunits to proton translocation. In vivo, can only synthesize ATP although its ATP hydrolase activity can be activated artificially in vitro. With the subunit alpha (ATP5F1A), forms the catalytic core in the F(1) domain. The polypeptide is ATP synthase F(1) complex catalytic subunit beta, mitochondrial (Rattus norvegicus (Rat)).